The chain runs to 705 residues: Choline transporter-like protein 2 (705 aa).

The Cytoplasmic segment spans residues 1–31 (MEDQRKYGAYGTPQKYDPTFKGPIYNRGCTD). Phosphothreonine is present on threonine 12. The helical transmembrane segment at 32-52 (VLCCVLLFLAIVGYVAVGLIA) threads the bilayer. The Extracellular segment spans residues 53 to 231 (WTHGDPRKVI…RIFEDYTVSW (179 aa)). 2 N-linked (GlcNAc...) asparagine glycosylation sites follow: asparagine 186 and asparagine 199. A helical membrane pass occupies residues 232–252 (YWIVIGLVIAMVLSLLFIILL). The Cytoplasmic segment spans residues 253-255 (RFL). Residues 256 to 276 (AGIMVWVMIVLVILVLGYGIF) form a helical membrane-spanning segment. Over 277–314 (HCYMEYARLRGEAGSDISVLDLGFQTDFRVYLHLRQTW) the chain is Extracellular. A helical transmembrane segment spans residues 315–335 (LAFMIILSILEVIIILLLIFL). Topologically, residues 336–363 (RKRILIAIALIKEASRAVGYVMCSLLYP) are cytoplasmic. The chain crosses the membrane as a helical span at residues 364–384 (LVTFFLLCLCIAYWASTAVFL). At 385–455 (STSNEAVYKI…IFNAFMFFWL (71 aa)) the chain is on the extracellular side. Asparagine 414 carries N-linked (GlcNAc...) asparagine glycosylation. Residues 456–478 (ANFVLALGQVTLAGAFASYYWAL) traverse the membrane as a helical segment. Topologically, residues 479–503 (RKPDDMPAFPLFAAFGRALRYHTGS) are cytoplasmic. Residues 504–524 (LAFGSLILAIVQIIRVILEYL) traverse the membrane as a helical segment. Topologically, residues 525-562 (DQRLKAAENKFAKFLMTCLKCCFWCLEKFIKFLNRNAY) are extracellular. The chain crosses the membrane as a helical span at residues 563 to 583 (IMIAIYGTNFCTSARNAFFLL). Residues 584-598 (MRNIIRVAVLDKVTD) lie on the Cytoplasmic side of the membrane. Residues 599-619 (FLFLLGKLLIVGSVGILAFFF) form a helical membrane-spanning segment. The Extracellular segment spans residues 620 to 637 (FTHRIRIVQDTAPPLNYY). A helical membrane pass occupies residues 638 to 658 (WVPILTVIVGSYLIAHGFFSV). At 659-705 (YGMCVDTLFLCFLEDLERNNGSSERPYFMSSTLKKLLNKTNKKPVES) the chain is on the cytoplasmic side.

It belongs to the CTL (choline transporter-like) family. In terms of assembly, interacts with COCH. N-glycosylated; contains sialic acid. Not O-glycosylated. As to expression, expressed at high levels in lung, colon and in supporting cells of the inner ear (at protein level). Progressively lower levels in brain, tongue, liver and kidney (at protein level). In the tongue, strongly expressed in epithelial cells and in nerves within the musculature. Within the nerves, expression observed in the perineurial cells of the nerve sheath, in the Schwann cells and myelinated nerve fibers (at protein level). In the kidney, prominent expression in glomeruli in the lining of Bowman's capsule and on the mesangial cells adjacent to the vessels within the glomerulus (at protein level). Strongly expressed on the membranes of splenocytes (at protein level).

It localises to the cell membrane. The protein localises to the mitochondrion outer membrane. It catalyses the reaction choline(out) + n H(+)(in) = choline(in) + n H(+)(out). It carries out the reaction ethanolamine(out) + n H(+)(in) = ethanolamine(in) + n H(+)(out). In terms of biological role, choline/H+ antiporter, mainly in mitochodria. Also acts as a low-affinity ethanolamine/H+ antiporter, regulating the supply of extracellular ethanolamine (Etn) for the CDP-Etn pathway, redistribute intracellular Etn and balance the CDP-Cho and CDP-Etn arms of the Kennedy pathway. The protein is Choline transporter-like protein 2 (SLC44A2) of Cavia porcellus (Guinea pig).